Reading from the N-terminus, the 93-residue chain is MHDYIKERTIKIGKYIVETKKTVRVIAKEFGVSKSTVHKDLTERLPEINPDLANEVKEILDYHKSIRHLRGGEATKLKYKKDEILEGEPVQQS.

The 72-residue stretch at 4 to 75 folds into the HTH deoR-type domain; the sequence is YIKERTIKIG…IRHLRGGEAT (72 aa). The segment at residues 21-40 is a DNA-binding region (H-T-H motif); sequence KTVRVIAKEFGVSKSTVHKD.

Functionally, this protein regulates the transcription of sigK, which encodes mother cell chamber RNA polymerase sigma-factor (sigma K). The polypeptide is Stage III sporulation protein D (spoIIID) (Bacillus subtilis (strain 168)).